Here is a 479-residue protein sequence, read N- to C-terminus: Anaerobic nitric oxide reductase flavorubredoxin (479 aa).

The tract at residues 30-210 (LRGSSYNSYL…PFSRLVTPKI (181 aa)) is zinc metallo-hydrolase. The Fe cation site is built by histidine 79, glutamate 81, aspartate 83, histidine 147, aspartate 166, and histidine 227. Positions 254–393 (ITIFYDTMSN…LCRQHGRDIA (140 aa)) constitute a Flavodoxin-like domain. FMN contacts are provided by residues 260 to 264 (TMSNN) and 342 to 369 (AFGS…EMSL). The 52-residue stretch at 423 to 474 (GPKMQCSVCQWIYDPALGEPLQDVAPGTPWSEVPDNFLCPECSLGKDVFDVL) folds into the Rubredoxin-like domain. Residues cysteine 428, cysteine 431, cysteine 461, and cysteine 464 each contribute to the Fe cation site.

It in the N-terminal section; belongs to the zinc metallo-hydrolase group 3 family. As to quaternary structure, homotetramer. Requires Fe cation as cofactor. FMN serves as cofactor.

It is found in the cytoplasm. It functions in the pathway nitrogen metabolism; nitric oxide reduction. Functionally, anaerobic nitric oxide reductase; uses NADH to detoxify nitric oxide (NO), protecting several 4Fe-4S NO-sensitive enzymes. Has at least 2 reductase partners, only one of which (NorW, flavorubredoxin reductase) has been identified. NO probably binds to the di-iron center; electrons enter from the NorW at rubredoxin and are transferred sequentially to the FMN center and the di-iron center. Also able to function as an aerobic oxygen reductase. The chain is Anaerobic nitric oxide reductase flavorubredoxin from Salmonella paratyphi A (strain ATCC 9150 / SARB42).